The sequence spans 39 residues: Photosystem II reaction center protein Psb30 (39 aa).

Residues 12-32 (IFQLTFVALIMLAGPFVIFLL) traverse the membrane as a helical segment.

The protein belongs to the Psb30/Ycf12 family. In terms of assembly, PSII is composed of 1 copy each of membrane proteins PsbA, PsbB, PsbC, PsbD, PsbE, PsbF, PsbH, PsbI, PsbJ, PsbK, PsbL, PsbM, PsbT, PsbX, PsbY, PsbZ, Psb30/Ycf12, peripheral proteins PsbO, CyanoQ (PsbQ), PsbU, PsbV and a large number of cofactors. It forms dimeric complexes.

Its subcellular location is the cellular thylakoid membrane. In terms of biological role, a core subunit of photosystem II (PSII), probably helps stabilize the reaction center. The polypeptide is Photosystem II reaction center protein Psb30 (Microcystis aeruginosa (strain NIES-843 / IAM M-2473)).